Here is a 508-residue protein sequence, read N- to C-terminus: Steroid 17-alpha-hydroxylase/17,20 lyase (508 aa).

Residue asparagine 202 coordinates substrate. Cysteine 442 is a binding site for heme.

The protein belongs to the cytochrome P450 family. Heme is required as a cofactor.

It localises to the endoplasmic reticulum membrane. It is found in the microsome membrane. The enzyme catalyses a C21-steroid + reduced [NADPH--hemoprotein reductase] + O2 = a 17alpha-hydroxy-C21-steroid + oxidized [NADPH--hemoprotein reductase] + H2O + H(+). It carries out the reaction progesterone + reduced [NADPH--hemoprotein reductase] + O2 = 17alpha-hydroxyprogesterone + oxidized [NADPH--hemoprotein reductase] + H2O + H(+). It catalyses the reaction pregnenolone + reduced [NADPH--hemoprotein reductase] + O2 = 17alpha-hydroxypregnenolone + oxidized [NADPH--hemoprotein reductase] + H2O + H(+). The catalysed reaction is 17alpha-hydroxypregnenolone + reduced [NADPH--hemoprotein reductase] + O2 = 3beta-hydroxyandrost-5-en-17-one + acetate + oxidized [NADPH--hemoprotein reductase] + H2O + 2 H(+). It functions in the pathway steroid hormone biosynthesis. The protein operates within steroid biosynthesis; glucocorticoid biosynthesis. Its activity is regulated as follows. Regulated predominantly by intracellular cAMP levels. The 17,20-lyase activity is stimulated by cytochrome b5, which acts as an allosteric effector increasing the Vmax of the lyase activity. Functionally, a cytochrome P450 monooxygenase involved in corticoid and androgen biosynthesis. Catalyzes 17-alpha hydroxylation of C21 steroids, which is common for both pathways. A second oxidative step, required only for androgen synthesis, involves an acyl-carbon cleavage. Hydroxylates pregnenolone to form 17-alpha pregnenolone, followed by the cleavage of the C17-C20 bond to form dehydroepiandrosterone (DHEA). Has 17-alpha hydroxylase activity toward progesterone. The 17-alpha hydroxy intermediates, as part of adrenal glucocorticoids biosynthesis pathway, are precursors of cortisol. Mechanistically, uses molecular oxygen inserting one oxygen atom into a substrate, and reducing the second into a water molecule, with two electrons provided by NADPH via cytochrome P450 reductase (CPR; NADPH-ferrihemoprotein reductase). The protein is Steroid 17-alpha-hydroxylase/17,20 lyase (CYP17A1) of Papio hamadryas ursinus (Chacma baboon).